The following is a 590-amino-acid chain: Arginine--tRNA ligase (590 aa).

Positions 131-141 match the 'HIGH' region motif; the sequence is PNIAKEMHVGH.

The protein belongs to the class-I aminoacyl-tRNA synthetase family. Monomer.

It localises to the cytoplasm. It carries out the reaction tRNA(Arg) + L-arginine + ATP = L-arginyl-tRNA(Arg) + AMP + diphosphate. In Synechococcus sp. (strain RCC307), this protein is Arginine--tRNA ligase.